Reading from the N-terminus, the 69-residue chain is Consomatin Be1 (69 aa).

The first 22 residues, 1–22 (MEMAYWVMVMMMVWITAPLSEG), serve as a signal peptide directing secretion. A propeptide spanning residues 23–57 (GKLNDVIRALAPDDVTPQFILRSLISRRRSDSDVR) is cleaved from the precursor. The residue at position 58 (E58) is a 4-carboxyglutamate. Cysteines 62 and 67 form a disulfide. A D-tryptophan modification is found at W64. A 4-hydroxyproline mark is found at P68 and P69.

This sequence belongs to the conotoxin C superfamily. Consomatin family. As to expression, expressed by the venom duct.

It is found in the secreted. Its function is as follows. Moderately activates human somatostatin receptors (SSTR) with a preferential activation of SSTR1 and SSTR4. In vivo, does not cause behavioral changes in mice within a few minutes of intracranial injection, but causes a progressive loss of movement thereafter. Four to five hours after injection, mice recover, even with the highest dose tested. Shows antinociception and antihyperalgesia activities in two mouse models of acute pain, most probably by acting outside the central nervous system. The protein is Consomatin Be1 of Conus betulinus (Beech cone).